A 202-amino-acid polypeptide reads, in one-letter code: Holliday junction branch migration complex subunit RuvA (202 aa).

The tract at residues 1 to 65 is domain I; the sequence is MIAYVEGRLA…EDALELYGFA (65 aa). Residues 66-144 are domain II; the sequence is TWDERQTFIV…VEDLPAAAPL (79 aa). Residues 145–155 are flexible linker; it reads VTGGAPGGVFR. Residues 155-202 are domain III; it reads RDALAGLANLGYGEEEASHVLKDVLHGEPDLDVGGALRAALRALARGR.

It belongs to the RuvA family. As to quaternary structure, homotetramer. Forms an RuvA(8)-RuvB(12)-Holliday junction (HJ) complex. HJ DNA is sandwiched between 2 RuvA tetramers; dsDNA enters through RuvA and exits via RuvB. An RuvB hexamer assembles on each DNA strand where it exits the tetramer. Each RuvB hexamer is contacted by two RuvA subunits (via domain III) on 2 adjacent RuvB subunits; this complex drives branch migration. In the full resolvosome a probable DNA-RuvA(4)-RuvB(12)-RuvC(2) complex forms which resolves the HJ.

The protein localises to the cytoplasm. In terms of biological role, the RuvA-RuvB-RuvC complex processes Holliday junction (HJ) DNA during genetic recombination and DNA repair, while the RuvA-RuvB complex plays an important role in the rescue of blocked DNA replication forks via replication fork reversal (RFR). RuvA specifically binds to HJ cruciform DNA, conferring on it an open structure. The RuvB hexamer acts as an ATP-dependent pump, pulling dsDNA into and through the RuvAB complex. HJ branch migration allows RuvC to scan DNA until it finds its consensus sequence, where it cleaves and resolves the cruciform DNA. The protein is Holliday junction branch migration complex subunit RuvA of Nitratidesulfovibrio vulgaris (strain ATCC 29579 / DSM 644 / CCUG 34227 / NCIMB 8303 / VKM B-1760 / Hildenborough) (Desulfovibrio vulgaris).